The following is a 369-amino-acid chain: GTPase Obg (369 aa).

The Obg domain occupies 1–159 (MKFIDEARIE…RMLKLELKVL (159 aa)). The disordered stretch occupies residues 128-147 (LHFKSSTNRAPRQKTDGKPG). The OBG-type G domain maps to 160–334 (ADVGLLGMPN…LCYAIYDYLA (175 aa)). GTP-binding positions include 166 to 173 (GMPNAGKS), 191 to 195 (FTTLA), 213 to 216 (DIPG), 284 to 287 (NKLD), and 315 to 317 (SAL). Mg(2+) is bound by residues serine 173 and threonine 193.

The protein belongs to the TRAFAC class OBG-HflX-like GTPase superfamily. OBG GTPase family. In terms of assembly, monomer. Requires Mg(2+) as cofactor.

It localises to the cytoplasm. In terms of biological role, an essential GTPase which binds GTP, GDP and possibly (p)ppGpp with moderate affinity, with high nucleotide exchange rates and a fairly low GTP hydrolysis rate. Plays a role in control of the cell cycle, stress response, ribosome biogenesis and in those bacteria that undergo differentiation, in morphogenesis control. This is GTPase Obg from Burkholderia multivorans (strain ATCC 17616 / 249).